The chain runs to 109 residues: Probable endoribonuclease MazF5 (109 aa).

The protein belongs to the PemK/MazF family. Forms a complex with cognate antitoxin MazE5.

In terms of biological role, toxic component of a type II toxin-antitoxin (TA) system. Upon expression in M.smegmatis inhibits colony formation. Its toxic effect is neutralized by coexpression with cognate antitoxin MazE5. Probably an endoribonuclease. The chain is Probable endoribonuclease MazF5 (mazF5) from Mycobacterium tuberculosis (strain ATCC 25618 / H37Rv).